The chain runs to 134 residues: Terepressin/terephysin (134 aa).

A signal peptide spans 1-33; it reads MKCSVLPRSRLSWTMCVLLLPLLMLMLEGGVQG. A disulfide bridge connects residues Cys-34 and Cys-39. A propeptide spanning residues 44 to 50 is cleaved from the precursor; it reads KRAVDSV. 7 disulfide bridges follow: Cys-56–Cys-100, Cys-59–Cys-73, Cys-67–Cys-90, Cys-74–Cys-80, Cys-107–Cys-121, Cys-115–Cys-133, and Cys-122–Cys-127.

Belongs to the vasopressin/oxytocin family. In terms of processing, contains 7 disulfide bonds. In terms of tissue distribution, expressed by the venom duct.

It is found in the secreted. The polypeptide is Terepressin/terephysin (Terebra subulata (Chocolate spotted auger)).